Consider the following 102-residue polypeptide: Serum amyloid A-5 protein (102 aa).

A disordered region spans residues G68–Y102. A compositionally biased stretch (basic and acidic residues) spans R69–R82.

It belongs to the SAA family. In terms of tissue distribution, expressed by the liver; secreted in plasma.

The protein localises to the secreted. Functionally, major acute phase reactant. Apolipoprotein of the HDL complex. The sequence is that of Serum amyloid A-5 protein from Mesocricetus auratus (Golden hamster).